We begin with the raw amino-acid sequence, 193 residues long: Probable GTP-binding protein EngB (193 aa).

The region spanning 22 to 193 (ALPEFALAGR…EAWAALERFL (172 aa)) is the EngB-type G domain. Residues 30–37 (GRSNVGKS), 57–61 (GKTQT), 75–78 (DVPG), 142–145 (TKAD), and 174–176 (FSA) each bind GTP. Positions 37 and 59 each coordinate Mg(2+).

This sequence belongs to the TRAFAC class TrmE-Era-EngA-EngB-Septin-like GTPase superfamily. EngB GTPase family. Mg(2+) serves as cofactor.

Its function is as follows. Necessary for normal cell division and for the maintenance of normal septation. This chain is Probable GTP-binding protein EngB, found in Geobacillus sp. (strain WCH70).